Reading from the N-terminus, the 975-residue chain is Translation initiation factor IF-2 (975 aa).

Residues 48–63 are compositionally biased toward basic and acidic residues; sequence DHLRKSHGATDGDKRK. Disordered stretches follow at residues 48 to 84 and 98 to 388; these read DHLRKSHGATDGDKRKITLTRRHTSEIKQADATGKAR and KRDD…QAPT. Low complexity predominate over residues 104-115; sequence ETGADQAQAQTD. Positions 120–177 are enriched in basic and acidic residues; it reads AELKRREEEARREAELLEKQAQELRERQERLEREEAERRAREEAAEAERRRAEEEAAA. The span at 178–211 shows a compositional bias: low complexity; that stretch reads KRAAAAQAEAAQQAAAAREQAQRAQSEPAEQSAQ. Over residues 212 to 263 the composition is skewed to basic and acidic residues; the sequence is DEARAAAERAAQREAAKKAEDAAREAADKARAEQEEIRKRREAAEAEARAIR. Over residues 302-330 the composition is skewed to low complexity; the sequence is KPAGEAAAARPAAKKPASGAPAPAAAPAG. The span at 359–372 shows a compositional bias: gly residues; it reads SSGGVDRGWRGGPK. Positions 475–644 constitute a tr-type G domain; that stretch reads PRPPVVTVMG…LLQAEVLELK (170 aa). The segment at 484 to 491 is G1; it reads GHVDHGKT. 484 to 491 contacts GTP; the sequence is GHVDHGKT. The G2 stretch occupies residues 509-513; the sequence is GITQH. Residues 530–533 form a G3 region; that stretch reads DTPG. Residues 530–534 and 584–587 each bind GTP; these read DTPGH and NKID. Residues 584–587 form a G4 region; sequence NKID. Residues 620-622 form a G5 region; it reads SAK.

It belongs to the TRAFAC class translation factor GTPase superfamily. Classic translation factor GTPase family. IF-2 subfamily.

Its subcellular location is the cytoplasm. One of the essential components for the initiation of protein synthesis. Protects formylmethionyl-tRNA from spontaneous hydrolysis and promotes its binding to the 30S ribosomal subunits. Also involved in the hydrolysis of GTP during the formation of the 70S ribosomal complex. The protein is Translation initiation factor IF-2 of Burkholderia mallei (strain NCTC 10247).